A 535-amino-acid polypeptide reads, in one-letter code: Putative cysteine ligase BshC (535 aa).

Residues 420–477 (DTFKALKESINSAYKNLQEKLAPLGADFQKLTGENLGRVMAQVKYLEERAQKYHREKN) are a coiled coil.

It belongs to the BshC family.

Involved in bacillithiol (BSH) biosynthesis. May catalyze the last step of the pathway, the addition of cysteine to glucosamine malate (GlcN-Mal) to generate BSH. The sequence is that of Putative cysteine ligase BshC from Carboxydothermus hydrogenoformans (strain ATCC BAA-161 / DSM 6008 / Z-2901).